A 202-amino-acid chain; its full sequence is Holliday junction branch migration complex subunit RuvA (202 aa).

The domain I stretch occupies residues 1–64 (MIGRLRGTLA…EDAQLLYGFA (64 aa)). Residues 65–143 (GKRERDFFRE…AWETSPAMFA (79 aa)) are domain II. Positions 144–154 (LVPNQPDGPAP) are flexible linker. Residues 154–202 (PVNTAENDAVSALISLGYKPQEASKAISAIKEKGLSSEDMIRRALKGMI) form a domain III region.

The protein belongs to the RuvA family. As to quaternary structure, homotetramer. Forms an RuvA(8)-RuvB(12)-Holliday junction (HJ) complex. HJ DNA is sandwiched between 2 RuvA tetramers; dsDNA enters through RuvA and exits via RuvB. An RuvB hexamer assembles on each DNA strand where it exits the tetramer. Each RuvB hexamer is contacted by two RuvA subunits (via domain III) on 2 adjacent RuvB subunits; this complex drives branch migration. In the full resolvosome a probable DNA-RuvA(4)-RuvB(12)-RuvC(2) complex forms which resolves the HJ.

The protein localises to the cytoplasm. Its function is as follows. The RuvA-RuvB-RuvC complex processes Holliday junction (HJ) DNA during genetic recombination and DNA repair, while the RuvA-RuvB complex plays an important role in the rescue of blocked DNA replication forks via replication fork reversal (RFR). RuvA specifically binds to HJ cruciform DNA, conferring on it an open structure. The RuvB hexamer acts as an ATP-dependent pump, pulling dsDNA into and through the RuvAB complex. HJ branch migration allows RuvC to scan DNA until it finds its consensus sequence, where it cleaves and resolves the cruciform DNA. The protein is Holliday junction branch migration complex subunit RuvA of Pseudomonas fluorescens (strain Pf0-1).